Here is a 741-residue protein sequence, read N- to C-terminus: Prestin (741 aa).

Over 1–79 (MDHVEETEIL…WLPAYRFKEY (79 aa)) the chain is Cytoplasmic. A helical membrane pass occupies residues 80–105 (VLGDIVSGISTGVLQLPQGLAFAMLA). Residues 106-109 (AVPP) are Extracellular-facing. The chain crosses the membrane as a helical span at residues 110-125 (VFGLYSSFYPVIMYCF). The Cytoplasmic segment spans residues 126 to 137 (FGTSRHISIGPF). A helical membrane pass occupies residues 138-147 (AVISLMIGGV). Over 148 to 178 (AVRLVPDDIVIPGGVNATNSTEARDALRVKV) the chain is Extracellular. The Involved in motor function signature appears at 158–168 (IPGGVNATNST). 2 N-linked (GlcNAc...) asparagine glycosylation sites follow: asparagine 163 and asparagine 166. The next 2 helical transmembrane spans lie at 179-208 (AMSV…LTEP) and 209-230 (LVRG…KYLF). Topologically, residues 231-243 (GVKTKRYSGIFSV) are extracellular. The segment at residues 244-248 (VYSTV) is an intramembrane region (helical). The Extracellular segment spans residues 249–261 (AVLQNVKNLNVCS). The chain crosses the membrane as a helical span at residues 262 to 283 (LGVGLMVFGLLLGGKEFNERFK). The Cytoplasmic portion of the chain corresponds to 284 to 291 (EKLPAPIP). Residues 292-303 (LEFFAVVMGTGI) traverse the membrane as a helical segment. Residues 304 to 338 (SAGFSLHESYNVDVVGTLPLGLLPPANPDTSLFHL) lie on the Extracellular side of the membrane. The chain crosses the membrane as a helical span at residues 339-361 (VYVDAIAIAIVGFSVTISMAKTL). Topologically, residues 362–370 (ANKHGYQVD) are cytoplasmic. Residues 371–388 (GNQELIALGLCNSTGSLF) form a helical membrane-spanning segment. The Extracellular portion of the chain corresponds to 389-396 (QTFAISCS). Residues 397–406 (LSRSLVQEGT) form a helical membrane-spanning segment. Serine 398 contributes to the salicylate binding site. Over 407–410 (GGKT) the chain is Cytoplasmic. A helical transmembrane segment spans residues 411–429 (QLAGCLASLMILLVILATG). Residues 430 to 436 (FLFESLP) lie on the Extracellular side of the membrane. Residues 437–459 (QAVLSAIVIVNLKGMFMQFSDLP) form a helical membrane-spanning segment. Residues 460 to 467 (FFWRTSKI) are Cytoplasmic-facing. A helical transmembrane segment spans residues 468-483 (ELTIWLTTFVSSLFLG). A topological domain (extracellular) is located at residue leucine 484. The helical transmembrane segment at 485-498 (DYGLITAVIIALMT) threads the bilayer. Topologically, residues 499–741 (VIYRTQSPSY…DSEPNATPEA (243 aa)) are cytoplasmic. Residues 505–718 (SPSYIVLGQL…AVLGSQVREA (214 aa)) are extended region for STAS domain. One can recognise an STAS domain in the interval 525–713 (AYEEVKEVPG…HSIHDAVLGS (189 aa)). The tract at residues 718–741 (ALAEQEATAAPPQEDSEPNATPEA) is disordered. Residues 721–730 (EQEATAAPPQ) show a composition bias toward low complexity.

Belongs to the SLC26A/SulP transporter (TC 2.A.53) family. Homodimer. Interacts (via STAS domain) with CALM; this interaction is calcium-dependent and the STAS domain interacts with only one lobe of CALM which is an elongated conformation.

It is found in the cell membrane. It catalyses the reaction 2 hydrogencarbonate(in) + chloride(out) = 2 hydrogencarbonate(out) + chloride(in). In terms of biological role, voltage-sensitive motor protein that drives outer hair cell (OHC) electromotility (eM) and participates in sound amplification in the hearing organ. Converts changes in the transmembrane electric potential into mechanical displacements resulting in the coupling of its expansion to movement of a charged voltage sensor across the lipid membrane. The nature of the voltage sensor is not completely clear, and two models compete. In the first model, acts as an incomplete transporter where intracellular chloride anion acts as extrinsic voltage sensor that drives conformational change in the protein which is sufficient to produce a length change in the plane of the membrane and hence in the length of the OHC. The second model in which multiple charged amino acid residues are distributed at the intracellular and extracellular membrane interfaces that form an intrinsic voltage sensor, whose movement produces the non-linear capacitance (NLC). However, the effective voltage sensor may be the result of a hybrid voltage sensor assembled from intrinsic charge (charged residues) and extrinsic charge (bound anion). Notably, binding of anions to the anion-binding pocket partially neutralizes the intrinsic positive charge rather than to form an electrically negative sensor, therefore remaining charge may serve as voltage sensor that, after depolarization, moves from down (expanded state) to up (contracted) conformation, which is accompanied by an eccentric contraction of the intermembrane cross-sectional area of the protein as well as a major increase in the hydrophobic thickness of the protein having as consequences the plasma membrane thickening and the cell contraction after membrane depolarization. The anion-binding pocket transits from the inward-open (Down) state, where it is exposed toward the intracellular solvent in the absence of anion, to the occluded (Up) state upon anion binding. Salicylate competes for the anion-binding site and inhibits the voltage-sensor movement, and therefore inhibits the charge transfer and electromotility by displacing Cl(-) from the anion-binding site and by preventing the structural transitions to the contracted state. In addition, can act as a weak Cl(-)/HCO3 (-) antiporter across the cell membrane and so regulate the intracellular pH of the outer hair cells (OHCs), while firstly found as being unable to mediate electrogenic anion transport. Moreover, supports a role in cardiac mechanical amplification serving as an elastic element to enhance the actomyosin- based sarcomere contraction system. The sequence is that of Prestin from Tursiops truncatus (Atlantic bottle-nosed dolphin).